Reading from the N-terminus, the 580-residue chain is MFS-type transporter thnB (580 aa).

The segment at 1 to 33 (MSGDYSATRKSENVDTSTTASQEDSSLAPEQPE) is disordered. The span at 14–25 (VDTSTTASQEDS) shows a compositional bias: polar residues. Helical transmembrane passes span 60 to 80 (LITL…DQTI), 92 to 112 (FHGL…LGGF), 125 to 145 (LKIS…ICGV), 157 to 177 (AIAG…LAFS), 188 to 208 (STMG…GGAF), 216 to 236 (WCFY…FLFF), and 259 to 279 (VGTV…QYAG). A glycan (N-linked (GlcNAc...) asparagine) is linked at Asn-285. The next 7 membrane-spanning stretches (helical) occupy residues 286-306 (SSVV…LAAW), 331-351 (IFQF…PIYF), 364-384 (VDNL…GAAV), 389-409 (MATP…GLLY), 421-441 (IGYQ…ALNI), 457-477 (SLYF…QAAF), and 529-549 (FAVS…MVMI).

This sequence belongs to the major facilitator superfamily.

The protein resides in the membrane. Its function is as follows. MFS-type transporter; part of the gene cluster that produces the tetronate natural products trihazones. The sequence is that of MFS-type transporter thnB from Trichoderma harzianum (Hypocrea lixii).